Here is a 370-residue protein sequence, read N- to C-terminus: RNA-binding motif protein, X chromosome (370 aa).

The RRM domain occupies 8–86 (GKLFIGGLNT…KPIKVEQATK (79 aa)). Basic and acidic residues predominate over residues 69-80 (LNGKALDGKPIK). The interval 69 to 370 (LNGKALDGKP…SDRGGGRSRY (302 aa)) is disordered. A compositionally biased stretch (low complexity) spans 87 to 110 (PSFSTPSRRGPPTSPRSRGPPRGL). A compositionally biased stretch (pro residues) spans 127–140 (RGPPPRSGGPPPKR). 2 stretches are compositionally biased toward basic and acidic residues: residues 158–196 (LSRE…DRYD) and 219–254 (YSYR…DYSD). The segment covering 303–316 (RDSYSSSRNDIYSS) has biased composition (low complexity). Composition is skewed to basic and acidic residues over residues 317-326 (GRDRVGRQER) and 359-370 (SRSDRGGGRSRY).

It localises to the nucleus. Its function is as follows. RNA-binding protein that plays several role in the regulation of pre- and post-transcriptional processes. Implicated in tissue-specific regulation of gene transcription and alternative splicing of pre-mRNAs. Associates with chromatin. Associates with nascent mRNAs transcribed by RNA polymerase II. Component of the supraspliceosome complex that regulates pre-mRNA alternative splice site selection. Binds non-specifically to pre-mRNAs. Required for embryonic development, in particular of the brain. This chain is RNA-binding motif protein, X chromosome (rbmx), found in Xenopus laevis (African clawed frog).